The primary structure comprises 374 residues: MSFNNTVAVAMSGGVDSSTVAAMLREEGYDLIGLTLQLWNQRRLAGKDGMPEPVQGRCCSIDDVYDARRVAETLGIPYYLVNEQERFESDVVRPFVSEYLHGRTPIPCSLCNNHLKFDQLLLRARQFGADRIATGHYARNEYDPARGRWILKRPADRSKDQTWFLFGLTQEQLSRTLFPLGGYTKPEVREIAATHKLALAAKPDSQEICFIPNGDYKRFIDAYLDEQGESIPDSAGELVSTTGEVLGRHAGIHNFTVGQRKGLGVTAPNPLYVLQIDPASHRVTVGSDTELATETFRARDCNWISIADLTGERRAQVKIRHRHEPAWATVRPVRGADGTAEAEITFDEPQRAVTPGQSAVFYDEDEVIGGGWIV.

ATP is bound by residues 10–17 (AMSGGVDS) and L36. The active-site Nucleophile is the C111. Residues C111 and C209 are joined by a disulfide bond. Residue G135 coordinates ATP. Residues 159 to 161 (KDQ) are interaction with tRNA. Catalysis depends on C209, which acts as the Cysteine persulfide intermediate.

Belongs to the MnmA/TRMU family.

The protein localises to the cytoplasm. It carries out the reaction S-sulfanyl-L-cysteinyl-[protein] + uridine(34) in tRNA + AH2 + ATP = 2-thiouridine(34) in tRNA + L-cysteinyl-[protein] + A + AMP + diphosphate + H(+). Catalyzes the 2-thiolation of uridine at the wobble position (U34) of tRNA, leading to the formation of s(2)U34. This is tRNA-specific 2-thiouridylase MnmA from Acidobacterium capsulatum (strain ATCC 51196 / DSM 11244 / BCRC 80197 / JCM 7670 / NBRC 15755 / NCIMB 13165 / 161).